The primary structure comprises 614 residues: Zinc metalloproteinase-disintegrin-like Eoc1 (614 aa).

Residues 1–19 (MQVLLITISLAVLPYLGSS) form the signal peptide. Residues 20 to 193 (IILESGIVND…KASQLNLTPE (174 aa)) constitute a propeptide that is removed on maturation. Residue Gln-194 is modified to Pyrrolidone carboxylic acid. Residues 202–398 (KHIKVAIVAD…KMPQCILIKP (197 aa)) enclose the Peptidase M12B domain. Residue Asn-268 is glycosylated (N-linked (GlcNAc...) asparagine). Intrachain disulfides connect Cys-313-Cys-393, Cys-353-Cys-377, and Cys-355-Cys-360. A Zn(2+)-binding site is contributed by His-338. Glu-339 is an active-site residue. Positions 342 and 348 each coordinate Zn(2+). Asn-376 carries an N-linked (GlcNAc...) asparagine glycan. The 87-residue stretch at 406–492 (PPVCGNSLVE…ECPADQFQRN (87 aa)) folds into the Disintegrin domain. The Ca(2+) site is built by Val-408, Asn-411, Leu-413, Glu-415, Glu-418, and Asp-421. Disulfide bonds link Cys-409–Cys-438, Cys-420–Cys-433, Cys-422–Cys-428, Cys-432–Cys-455, Cys-446–Cys-452, Cys-451–Cys-477, Cys-464–Cys-484, Cys-471–Cys-503, Cys-496–Cys-508, Cys-515–Cys-565, Cys-530–Cys-576, Cys-543–Cys-553, Cys-560–Cys-602, and Cys-596–Cys-607. The short motif at 470–472 (ECD) is the D/ECD-tripeptide element. A glycan (N-linked (GlcNAc...) asparagine) is linked at Asn-498.

The protein belongs to the venom metalloproteinase (M12B) family. P-III subfamily. P-IIIc sub-subfamily. In terms of assembly, heterodimer; disulfide-linked. The cofactor is Zn(2+). Expressed by the venom gland.

It localises to the secreted. Functionally, this metalloproteinase hydrolyzes azocasein, and oxidized insulin B-chain. Also hydrolyzes the alpha-chain (FGA) and more slowly the beta-chain of fibrinogen (FGB), without affecting the gamma-chain. Does not cleave fibrin. Inhibits endothelial cell adhesion to extracellular matrix proteins such as fibrinogen, fibronectin, vitronectin, collagen I, and collagen IV. Induces apoptosis in vascular endothelial cells. This is Zinc metalloproteinase-disintegrin-like Eoc1 (Svmp3-Eoc1) from Echis ocellatus (Ocellated saw-scaled viper).